We begin with the raw amino-acid sequence, 112 residues long: Large ribosomal subunit protein uL22 (112 aa).

This sequence belongs to the universal ribosomal protein uL22 family. As to quaternary structure, part of the 50S ribosomal subunit.

This protein binds specifically to 23S rRNA; its binding is stimulated by other ribosomal proteins, e.g. L4, L17, and L20. It is important during the early stages of 50S assembly. It makes multiple contacts with different domains of the 23S rRNA in the assembled 50S subunit and ribosome. Its function is as follows. The globular domain of the protein is located near the polypeptide exit tunnel on the outside of the subunit, while an extended beta-hairpin is found that lines the wall of the exit tunnel in the center of the 70S ribosome. In Nitratidesulfovibrio vulgaris (strain ATCC 29579 / DSM 644 / CCUG 34227 / NCIMB 8303 / VKM B-1760 / Hildenborough) (Desulfovibrio vulgaris), this protein is Large ribosomal subunit protein uL22.